A 368-amino-acid polypeptide reads, in one-letter code: Homoserine O-acetyltransferase (368 aa).

One can recognise an AB hydrolase-1 domain in the interval 41-352; the sequence is NVILITHALS…DYGHDSFLVE (312 aa). The active-site Nucleophile is serine 147. Arginine 219 serves as a coordination point for substrate. Active-site residues include aspartate 313 and histidine 346. Aspartate 347 serves as a coordination point for substrate.

It belongs to the AB hydrolase superfamily. MetX family. As to quaternary structure, homodimer.

It is found in the cytoplasm. It catalyses the reaction L-homoserine + acetyl-CoA = O-acetyl-L-homoserine + CoA. Its pathway is amino-acid biosynthesis; L-methionine biosynthesis via de novo pathway; O-acetyl-L-homoserine from L-homoserine: step 1/1. Its function is as follows. Transfers an acetyl group from acetyl-CoA to L-homoserine, forming acetyl-L-homoserine. The polypeptide is Homoserine O-acetyltransferase (Nautilia profundicola (strain ATCC BAA-1463 / DSM 18972 / AmH)).